A 218-amino-acid chain; its full sequence is Thiopurine S-methyltransferase (218 aa).

Trp-10, Leu-45, Glu-66, and Arg-123 together coordinate S-adenosyl-L-methionine.

Belongs to the class I-like SAM-binding methyltransferase superfamily. TPMT family.

The protein localises to the cytoplasm. It carries out the reaction S-adenosyl-L-methionine + a thiopurine = S-adenosyl-L-homocysteine + a thiopurine S-methylether.. The polypeptide is Thiopurine S-methyltransferase (Pseudomonas aeruginosa (strain LESB58)).